Here is an 82-residue protein sequence, read N- to C-terminus: Immediate early response 3-interacting protein 1 (82 aa).

Helical transmembrane passes span 2-22 and 62-82; these read AFTL…IAVL and VMRV…LLFG.

This sequence belongs to the YOS1 family.

It is found in the endoplasmic reticulum membrane. Regulator of endoplasmic reticulum secretion that acts as a key determinant of brain size. Required for secretion of extracellular matrix proteins. Required for correct brain development by depositing sufficient extracellular matrix proteins for tissue integrity and the proliferation of neural progenitors. Acts as a regulator of the unfolded protein response (UPR). In Mus musculus (Mouse), this protein is Immediate early response 3-interacting protein 1.